The primary structure comprises 592 residues: A-type ATP synthase subunit A (592 aa).

233-240 lines the ATP pocket; it reads GPFGSGKT.

Belongs to the ATPase alpha/beta chains family. In terms of assembly, has multiple subunits with at least A(3), B(3), C, D, E, F, H, I and proteolipid K(x).

Its subcellular location is the cell membrane. The enzyme catalyses ATP + H2O + 4 H(+)(in) = ADP + phosphate + 5 H(+)(out). In terms of biological role, component of the A-type ATP synthase that produces ATP from ADP in the presence of a proton gradient across the membrane. The A chain is the catalytic subunit. The polypeptide is A-type ATP synthase subunit A (Saccharolobus islandicus (strain Y.G.57.14 / Yellowstone #1) (Sulfolobus islandicus)).